The sequence spans 107 residues: MNKKELFDAFDGFSQNLMVTLAEIEAMKKQVQGLVEENTILRLENTKLRERLSQLEHENLAKTSSKQGKDHLEGIYDEGFHICNFFYGQRRENDEECMFCRELLDRK.

Zn(2+) is bound by residues H81, C83, C97, and C100.

It belongs to the YabA family. As to quaternary structure, homotetramer. Interacts with both DnaA and DnaN, acting as a bridge between these two proteins. Zn(2+) is required as a cofactor.

The protein resides in the cytoplasm. Its subcellular location is the nucleoid. Its function is as follows. Involved in control of chromosome replication initiation. Inhibits the cooperative binding of DnaA to the oriC region, thus negatively regulating initiation of chromosome replication. Inhibits the ability of DnaA-ATP to form a helix on DNA; does not disassemble preformed DnaA-DNA helices. Decreases the residence time of DnaA on the chromosome at its binding sites (oriC, replication forks and promoter-binding sites). Tethers DnaA to the replication machinery via the DNA polymerase beta sliding clamp subunit (dnaN). Associates with oriC and other DnaA targets on the chromosome in a DnaA-dependent manner. The polypeptide is Replication initiation control protein YabA (Streptococcus equi subsp. equi (strain 4047)).